The primary structure comprises 953 residues: ABC transporter A family member 11 (953 aa).

Helical transmembrane passes span 33–53 (CLQIFSSFFFILLIFCIEEAM), 230–250 (GPVFFLAFSMFGFVLQLGALV), 277–297 (TWEGILTLVSSLFLVLFGMIF), 307–327 (FVLVFLLFLLFQFNMIGLAFA), 341–361 (VGFLVFLIGFITQFVSATGFP), and 417–437 (VISINIIYQWLLGTFLFWFVL). In terms of domain architecture, ABC transporter spans 519-764 (VQIHGLAKTY…FGTGFVATVS (246 aa)). 565-572 (GPNGAGKT) lines the ATP pocket.

Belongs to the ABC transporter superfamily. ABCA family. CPR flippase (TC 3.A.1.211) subfamily.

It localises to the membrane. This chain is ABC transporter A family member 11 (ABCA11), found in Arabidopsis thaliana (Mouse-ear cress).